The sequence spans 310 residues: Homoserine kinase (310 aa).

85–95 serves as a coordination point for ATP; that stretch reads PKGLGLGSSGA.

It belongs to the GHMP kinase family. Homoserine kinase subfamily.

It localises to the cytoplasm. It catalyses the reaction L-homoserine + ATP = O-phospho-L-homoserine + ADP + H(+). It participates in amino-acid biosynthesis; L-threonine biosynthesis; L-threonine from L-aspartate: step 4/5. Its function is as follows. Catalyzes the ATP-dependent phosphorylation of L-homoserine to L-homoserine phosphate. The sequence is that of Homoserine kinase from Thermoplasma acidophilum (strain ATCC 25905 / DSM 1728 / JCM 9062 / NBRC 15155 / AMRC-C165).